Consider the following 89-residue polypeptide: Putative acyl-CoA-binding protein (89 aa).

Residues 3–88 form the ACB domain; that stretch reads VEEQFKTSAE…VKELVEKNGL (86 aa). An acyl-CoA-binding positions include Lys-15, 30–34, Lys-52, Lys-56, and Tyr-75; that span reads YSLYK.

Belongs to the ACBP family.

Binds medium- and long-chain acyl-CoA esters with very high affinity and may function as an intracellular carrier of acyl-CoA esters. The protein is Putative acyl-CoA-binding protein of Hypsibius exemplaris (Freshwater tardigrade).